Reading from the N-terminus, the 591-residue chain is Aspartate--tRNA ligase (591 aa).

Position 176 (E176) interacts with L-aspartate. Positions Q200–K203 are aspartate. Residue R222 participates in L-aspartate binding. ATP is bound by residues R222–E224 and Q231. H450 provides a ligand contact to L-aspartate. E484 is a binding site for ATP. R491 is a binding site for L-aspartate. An ATP-binding site is contributed by G536–R539.

It belongs to the class-II aminoacyl-tRNA synthetase family. Type 1 subfamily. As to quaternary structure, homodimer.

Its subcellular location is the cytoplasm. The catalysed reaction is tRNA(Asp) + L-aspartate + ATP = L-aspartyl-tRNA(Asp) + AMP + diphosphate. Its function is as follows. Catalyzes the attachment of L-aspartate to tRNA(Asp) in a two-step reaction: L-aspartate is first activated by ATP to form Asp-AMP and then transferred to the acceptor end of tRNA(Asp). In Listeria monocytogenes serotype 4a (strain HCC23), this protein is Aspartate--tRNA ligase.